A 494-amino-acid polypeptide reads, in one-letter code: 1-aminocyclopropane-1-carboxylate synthase 2 (494 aa).

K279 carries the post-translational modification N6-(pyridoxal phosphate)lysine. The interval 474–494 (NVLNSPHTMSPHSPLVRARTY) is disordered. A compositionally biased stretch (polar residues) spans 475 to 484 (VLNSPHTMSP).

This sequence belongs to the class-I pyridoxal-phosphate-dependent aminotransferase family. Homodimer. Pyridoxal 5'-phosphate serves as cofactor.

It carries out the reaction S-adenosyl-L-methionine = 1-aminocyclopropane-1-carboxylate + S-methyl-5'-thioadenosine + H(+). It participates in alkene biosynthesis; ethylene biosynthesis via S-adenosyl-L-methionine; ethylene from S-adenosyl-L-methionine: step 1/2. Catalyzes the formation of 1-aminocyclopropane-1-carboxylate, a direct precursor of ethylene in higher plants. The chain is 1-aminocyclopropane-1-carboxylate synthase 2 (ACS2) from Cucurbita pepo (Vegetable marrow).